Consider the following 202-residue polypeptide: Protein TIFY 11g (202 aa).

Positions 1–11 are enriched in gly residues; that stretch reads MDAVGAAGGGA. A disordered region spans residues 1-31; it reads MDAVGAAGGGAMLPAAARRGQPPQPPCMTTA. Positions 12 to 21 are enriched in low complexity; the sequence is MLPAAARRGQ. The region spanning 101–136 is the Tify domain; sequence ATAPTAPLTIVYGGQVLVFEHYTAEAAEKLVQRTQH. Residues 185-200 carry the Jas motif; sequence PIARKASLQRFLQKRK. Positions 187–194 match the Nuclear localization signal motif; sequence ARKASLQR.

The protein belongs to the TIFY/JAZ family. Post-translationally, ubiquitinated. Targeted for degradation by the SCF(COI1) E3 ubiquitin ligase-proteasome pathway during jasmonate signaling.

The protein localises to the nucleus. In terms of biological role, repressor of jasmonate responses. This Oryza sativa subsp. japonica (Rice) protein is Protein TIFY 11g.